Consider the following 30-residue polypeptide: Trypsin inhibitor 2 (30 aa).

3 disulfides stabilise this stretch: C2-C19, C9-C21, and C15-C27.

This sequence belongs to the protease inhibitor I7 (squash-type serine protease inhibitor) family.

The protein localises to the secreted. In terms of biological role, inhibits trypsin. This is Trypsin inhibitor 2 from Ecballium elaterium (Squirting cucumber).